Reading from the N-terminus, the 140-residue chain is L-fucose mutarotase (140 aa).

H22 acts as the Proton donor in catalysis. Residues D30, R107, and 129–131 (YGN) contribute to the substrate site.

This sequence belongs to the RbsD / FucU family. FucU mutarotase subfamily. As to quaternary structure, homodecamer.

The protein resides in the cytoplasm. The enzyme catalyses alpha-L-fucose = beta-L-fucose. Its pathway is carbohydrate metabolism; L-fucose metabolism. Functionally, involved in the anomeric conversion of L-fucose. This chain is L-fucose mutarotase, found in Salmonella typhimurium (strain LT2 / SGSC1412 / ATCC 700720).